Consider the following 606-residue polypeptide: NADH-ubiquinone oxidoreductase chain 5 (606 aa).

16 helical membrane passes run 4–24, 38–58, 87–107, 117–137, 140–160, 171–191, 211–233, 241–261, 273–293, 301–320, 325–347, 366–386, 413–433, 457–477, 488–508, and 584–604; these read FSSL…SSIL, NIIS…IHSG, MIFV…SLWY, FFKY…ANNL, LFIG…WWYG, AILY…WFLF, LPLL…HPWL, TPVS…FLLI, IQSL…ICAL, IIAF…IGIN, AFLH…GSII, MPFT…MPFL, LIAT…ALLG, LLIG…PTTI, LTAL…SLIT, and IKLY…LFNL.

It belongs to the complex I subunit 5 family. In terms of assembly, core subunit of respiratory chain NADH dehydrogenase (Complex I) which is composed of 45 different subunits.

It is found in the mitochondrion inner membrane. It catalyses the reaction a ubiquinone + NADH + 5 H(+)(in) = a ubiquinol + NAD(+) + 4 H(+)(out). Functionally, core subunit of the mitochondrial membrane respiratory chain NADH dehydrogenase (Complex I) which catalyzes electron transfer from NADH through the respiratory chain, using ubiquinone as an electron acceptor. Essential for the catalytic activity and assembly of complex I. The sequence is that of NADH-ubiquinone oxidoreductase chain 5 (MT-ND5) from Equus asinus (Donkey).